Consider the following 619-residue polypeptide: MALLQIAEPGQSAAPHQHRLAVGIDLGTTNSLVAAVRSAQALTLPDEQGRHSLPSVVHYGETNVLVGYEAQDKSALDPQNTIVSVKRFMGRSLTDIQSGVHRLPYELHASENGLPVFTTPMGQVNPIQVSAEILKPLIARAETTLGGELAGVVITVPAYFDDAQRQGTKDAAELLGVKVLRLLNEPTAAAIAYGLDSKQEGVIAIYDLGGGTFDISVLRLNRGVFEVLATGGDSALGGDDFDHLLVSHLQQAWQITEPGSQLARQLLIEARRVKEALTDNDSVEASVVMADKTLTCTVDKSLFNELIGALVKKTIGCCRRTLRDAGVSVDDVIETVMVGGSTRVPLVREQVETFFKKTPLTSIDPDRVVAIGAAIQADILVGNKPESDLLLLDVIPLSLGVETMGGLVEKVVTRNTTIPVARAQEFTTFKDGQTAMAFHVVQGERELVEDCRSLARFTLHGIPPLAAGAAHIRVTFQVDADGLLSVTAMEKSTGVNTSIQVKPSFGLSDTEIATMLKDSMKYAKDDITRRMLAEQKVEAARVIESLNAALAKDAALLDEQEREELVVAIAQLDAVAQQDNIDAIEKAIANLDDKTQDFASRRMDNSIRAALKGQSVDNI.

This sequence belongs to the heat shock protein 70 family.

Chaperone involved in the maturation of iron-sulfur cluster-containing proteins. Has a low intrinsic ATPase activity which is markedly stimulated by HscB. The polypeptide is Chaperone protein HscA homolog (Shewanella frigidimarina (strain NCIMB 400)).